A 384-amino-acid chain; its full sequence is Nodal homolog 2-B (384 aa).

The first 18 residues, 1-18, serve as a signal peptide directing secretion; the sequence is MASLGAILLFAIASLMHG. Positions 19–283 are excised as a propeptide; that stretch reads RPIHSDRKGA…RVADARRHRR (265 aa). Asn-71, Asn-173, and Asn-344 each carry an N-linked (GlcNAc...) asparagine glycan. Cys-306 and Cys-372 form a disulfide bridge.

It belongs to the TGF-beta family. As to quaternary structure, homodimer; disulfide-linked. Forms heterodimers with the TGF-beta family member derriere. Interacts with tsku; enhances nodal2 activity.

Its subcellular location is the secreted. Its function is as follows. Cooperation and regulatory loops of multiple nodals are essential for mesendoderm patterning in early embryos. Essential for mesoderm formation and axial patterning during embryonic development. Activates the activin-like signaling pathway to induce dorsal and ventral mesoderm in animal cap ectoderm. In addition, also dorsalizes ventral marginal zone (VMZ) tissues during gastrulation. Induces muscle actin. Appears to act as both a short-range and long-range morphogen. The unprocessed protein inhibits bmp- and wnt-signaling. The chain is Nodal homolog 2-B (nodal2-b) from Xenopus laevis (African clawed frog).